The chain runs to 1096 residues: Protein EMBRYONIC FLOWER 1 (1096 aa).

8 disordered regions span residues 155–189 (KARG…EKLN), 274–296 (KTSG…VRGR), 315–348 (GATS…KGKQ), 366–420 (ETSQ…KKPV), 563–612 (LSRV…DIPM), 629–651 (DKEE…KNAL), 1007–1032 (DKEK…KNSS), and 1070–1096 (FKKK…TQNA). Short sequence motifs (nuclear localization signal) lie at residues 170 to 177 (SRKLVSPE) and 281 to 288 (IRKEESAL). Basic and acidic residues predominate over residues 281–294 (IRKEESALKKESVR). The segment covering 315–337 (GATSENASKSCDSDQGNSESTDS) has biased composition (polar residues). Residues 337–617 (SGFDRTPFKG…DDIPMEIVEL (281 aa)) form a DNA-binding region. The segment covering 371-381 (GIKEHDADPSK) has biased composition (basic and acidic residues). The segment covering 382–394 (RSTPAHSLFTGND) has biased composition (polar residues). Basic and acidic residues predominate over residues 572–601 (SGADRKGKTVMVQEHHGAPRSQSHDRKETT). Residues 866–1096 (LDPRLRSTTP…KPVCPPTQNA (231 aa)) are DNA-binding. Residues 1018 to 1032 (SCNNNASAGPVKNSS) show a composition bias toward polar residues. Positions 1071–1078 (KKKPAVCK) match the Nuclear localization signal 3 motif.

Interacts with MSI1. Expressed in mature embryo, root tips, cotyledons, leaves, stems, shoot apex, and flower clusters, with highest levels in flowers. The presence in the shoot apical meristem (SAM) is required to maintain vegetative development and prevent early flowering.

It localises to the nucleus. In terms of biological role, transcription repressor that regulates phase transition during shoot, flower and seeds development. Controls leaves development, shoot architecture and flowering by delaying both the vegetative to reproductive transition and flower initiation. Participates in polycomb group (PcG) protein complex-mediated (including EMF2) silencing of the flower homeotic genes AGAMOUS (AG), PISTILLATA (PI), and APETALA3 (AP3), as well as of some regulatory genes such as ABSCISIC ACID INSENSITIVE3 (ABI3), LONG VEGETATIVE PHASE1 (LOV1), and FLOWERING LOCUS C (FLC) during vegetative development. Required for histone methylation or for maintaining a stable histone methylation (e.g. H3K27me3) pattern of repressed target genes (including genes involved in salt stress response and flower development); this repression is counteracted by ULT1. Can bind non specifically DNA (both double- and single-stranded) and RNA. The chain is Protein EMBRYONIC FLOWER 1 from Arabidopsis thaliana (Mouse-ear cress).